Reading from the N-terminus, the 147-residue chain is uncharacterized protein (147 aa).

At 1–16 (MDHRAAFGYFSNACFK) the chain is on the extracellular side. The helical transmembrane segment at 17-37 (VMLFSSLLASFASSVAFISLI) threads the bilayer. Residues 38 to 105 (TFSLSSSESP…FEAAFFLLTN (68 aa)) lie on the Cytoplasmic side of the membrane. The chain crosses the membrane as a helical span at residues 106–126 (EMIFFILYYFFSCLMFFYVAS). Topologically, residues 127–147 (ERNTNPKILQTINTKPLYIKN) are extracellular.

Its subcellular location is the membrane. This is an uncharacterized protein from Saccharomyces cerevisiae (strain ATCC 204508 / S288c) (Baker's yeast).